Consider the following 200-residue polypeptide: Recombination protein RecR (200 aa).

The C4-type zinc finger occupies 57–72 (CQHCRTFTENSLCDIC). A Toprim domain is found at 81-176 (GQLCIVETPA…NITRIAHGVP (96 aa)).

This sequence belongs to the RecR family.

May play a role in DNA repair. It seems to be involved in an RecBC-independent recombinational process of DNA repair. It may act with RecF and RecO. This is Recombination protein RecR from Tolumonas auensis (strain DSM 9187 / NBRC 110442 / TA 4).